The primary structure comprises 264 residues: uncharacterized protein (264 aa).

Residue 13 to 20 (TGSTSGIG) coordinates NADP(+). S141 contacts substrate. Catalysis depends on Y154, which acts as the Proton acceptor.

The protein belongs to the short-chain dehydrogenases/reductases (SDR) family.

This is an uncharacterized protein from Bacillus subtilis (strain 168).